We begin with the raw amino-acid sequence, 206 residues long: Large ribosomal subunit protein uL13x (206 aa).

The protein belongs to the universal ribosomal protein uL13 family.

The polypeptide is Large ribosomal subunit protein uL13x (RPL13AC) (Arabidopsis thaliana (Mouse-ear cress)).